A 565-amino-acid polypeptide reads, in one-letter code: Protein nucleotidyltransferase YdiU (565 aa).

The ATP site is built by Gly-118, Gly-120, Arg-121, Lys-141, Asp-153, Gly-154, Arg-211, and Arg-218. Asp-290 serves as the catalytic Proton acceptor. Mg(2+)-binding residues include Asn-291 and Asp-300. Asp-300 is an ATP binding site.

The protein belongs to the SELO family. Mg(2+) serves as cofactor. Mn(2+) is required as a cofactor.

The catalysed reaction is L-seryl-[protein] + ATP = 3-O-(5'-adenylyl)-L-seryl-[protein] + diphosphate. It carries out the reaction L-threonyl-[protein] + ATP = 3-O-(5'-adenylyl)-L-threonyl-[protein] + diphosphate. It catalyses the reaction L-tyrosyl-[protein] + ATP = O-(5'-adenylyl)-L-tyrosyl-[protein] + diphosphate. The enzyme catalyses L-histidyl-[protein] + UTP = N(tele)-(5'-uridylyl)-L-histidyl-[protein] + diphosphate. The catalysed reaction is L-seryl-[protein] + UTP = O-(5'-uridylyl)-L-seryl-[protein] + diphosphate. It carries out the reaction L-tyrosyl-[protein] + UTP = O-(5'-uridylyl)-L-tyrosyl-[protein] + diphosphate. Its function is as follows. Nucleotidyltransferase involved in the post-translational modification of proteins. It can catalyze the addition of adenosine monophosphate (AMP) or uridine monophosphate (UMP) to a protein, resulting in modifications known as AMPylation and UMPylation. This chain is Protein nucleotidyltransferase YdiU, found in Nitrosospira multiformis (strain ATCC 25196 / NCIMB 11849 / C 71).